The following is a 520-amino-acid chain: EGF domain-specific O-linked N-acetylglucosamine transferase (520 aa).

A signal peptide spans 1–16 (MPILPILIGILHLSLA). N-linked (GlcNAc...) asparagine glycans are attached at residues N52, N176, and N250. The Required for optimal activity signature appears at 292–294 (DVE). Residue N479 is glycosylated (N-linked (GlcNAc...) asparagine). The Prevents secretion from ER motif lies at 517-520 (RNEL).

A divalent metal cation serves as cofactor.

It is found in the endoplasmic reticulum lumen. The enzyme catalyses L-seryl-[protein] + UDP-N-acetyl-alpha-D-glucosamine = 3-O-(N-acetyl-beta-D-glucosaminyl)-L-seryl-[protein] + UDP + H(+). It carries out the reaction L-threonyl-[protein] + UDP-N-acetyl-alpha-D-glucosamine = 3-O-(N-acetyl-beta-D-glucosaminyl)-L-threonyl-[protein] + UDP + H(+). Catalyzes the transfer of a single N-acetylglucosamine from UDP-GlcNAc to a serine or threonine residue in extracellular proteins resulting in their modification with a beta-linked N-acetylglucosamine (O-GlcNAc). Specifically glycosylates the Thr residue located between the fifth and sixth conserved cysteines of folded EGF-like domains. Involved in epithelial cell adhesion/interaction with the extracellular matrix by mediating glycosylation of proteins in the secretory pathway, such as Dumpy (Dp). In Drosophila melanogaster (Fruit fly), this protein is EGF domain-specific O-linked N-acetylglucosamine transferase (Eogt).